The primary structure comprises 145 residues: Bacilliredoxin SERP1006 (145 aa).

The protein belongs to the bacilliredoxin family.

This chain is Bacilliredoxin SERP1006, found in Staphylococcus epidermidis (strain ATCC 35984 / DSM 28319 / BCRC 17069 / CCUG 31568 / BM 3577 / RP62A).